A 178-amino-acid polypeptide reads, in one-letter code: uncharacterized protein (178 aa).

Positions 1–19 are cleaved as a signal peptide; sequence MKKLLIVTMLFTLALSAQA.

The protein belongs to the opacity porin family.

This is an uncharacterized protein from Haemophilus influenzae (strain ATCC 51907 / DSM 11121 / KW20 / Rd).